The primary structure comprises 380 residues: Cytochrome b (380 aa).

4 helical membrane-spanning segments follow: residues 34–54 (FGSL…LLAM), 78–99 (WLIR…FLHI), 114–134 (WNTG…GYVL), and 179–199 (FFAL…IHLT). 2 residues coordinate heme b: His84 and His98. The heme b site is built by His183 and His197. His202 provides a ligand contact to a ubiquinone. 4 helical membrane passes run 227–247 (FKDI…ALFS), 289–309 (LGGV…PFLH), 321–341 (LSQT…WIGS), and 348–368 (FIII…ILFP).

It belongs to the cytochrome b family. As to quaternary structure, the cytochrome bc1 complex contains 11 subunits: 3 respiratory subunits (MT-CYB, CYC1 and UQCRFS1), 2 core proteins (UQCRC1 and UQCRC2) and 6 low-molecular weight proteins (UQCRH/QCR6, UQCRB/QCR7, UQCRQ/QCR8, UQCR10/QCR9, UQCR11/QCR10 and a cleavage product of UQCRFS1). This cytochrome bc1 complex then forms a dimer. The cofactor is heme b.

It localises to the mitochondrion inner membrane. Functionally, component of the ubiquinol-cytochrome c reductase complex (complex III or cytochrome b-c1 complex) that is part of the mitochondrial respiratory chain. The b-c1 complex mediates electron transfer from ubiquinol to cytochrome c. Contributes to the generation of a proton gradient across the mitochondrial membrane that is then used for ATP synthesis. The sequence is that of Cytochrome b (MT-CYB) from Gallus gallus (Chicken).